We begin with the raw amino-acid sequence, 1774 residues long: U3 small nucleolar RNA-associated protein 10 (1774 aa).

Residues 1209-1228 form a disordered region; that stretch reads TEQGKSDGDESGSEPDNDNP. An HEAT repeat occupies 1734–1772; that stretch reads LVPVIAELLEDDDEEVEQEVRTGLVKVVETVLGEPFDRY.

It belongs to the HEATR1/UTP10 family. Component of the ribosomal small subunit (SSU) processome.

It is found in the nucleus. The protein localises to the nucleolus. In terms of biological role, involved in nucleolar processing of pre-18S ribosomal RNA. Involved in ribosome biosynthesis. The sequence is that of U3 small nucleolar RNA-associated protein 10 from Eremothecium gossypii (strain ATCC 10895 / CBS 109.51 / FGSC 9923 / NRRL Y-1056) (Yeast).